A 581-amino-acid polypeptide reads, in one-letter code: Myoneurin (581 aa).

The 66-residue stretch at 24-89 folds into the BTB domain; that stretch reads CDCTIVIGEF…IYTGTLNLDS (66 aa). The segment at 167–193 is disordered; the sequence is PKQGALAKKSSQTKKKKKAFNSQKTGQ. 2 short sequence motifs (nuclear localization signal) span residues 174–190 and 256–261; these read KKSS…NSQK and KRKRGK. At Ser288 the chain carries Phosphoserine. 7 consecutive C2H2-type zinc fingers follow at residues 301-323, 329-351, 357-380, 386-408, 414-436, 442-464, and 470-493; these read PMCN…MRIH, YVCH…VRTH, YKCE…RMHH, YKCD…ARKH, YVCD…VRRH, YVCD…SRKH, and FICE…TKVH.

This sequence belongs to the krueppel C2H2-type zinc-finger protein family.

Its subcellular location is the nucleus. This Bos taurus (Bovine) protein is Myoneurin (MYNN).